Reading from the N-terminus, the 518-residue chain is Fusicoccin H C-9 hydroxylase (518 aa).

The helical transmembrane segment at 12–29 (HLLLISTVIAVLAALIVS) threads the bilayer. 2 N-linked (GlcNAc...) asparagine glycosylation sites follow: asparagine 81 and asparagine 168. Position 456 (cysteine 456) interacts with heme.

Belongs to the cytochrome P450 family. Heme serves as cofactor.

The protein localises to the membrane. Its pathway is mycotoxin biosynthesis. In terms of biological role, cytochrome P450 monooxygenase; part of the 2 gene clusters that mediate the biosynthesis of fusicoccins, diterpene glucosides that display phytohormone-like activity and function as potent activators of plasma membrane H(+)-ATPases in plants by modifying 14-3-3 proteins and cause the plant disease constriction canker. The first step in the pathway is performed by the fusicoccadiene synthase PaFS that possesses both prenyl transferase and terpene cyclase activity, converting isopentenyl diphosphate and dimethylallyl diphosphate into geranylgeranyl diphosphate (GGDP) and successively converting GGDP into fusicocca-2,10(14)-diene, a precursor for fusicoccin H. The second step is the oxidation at the C-8 position by the cytochrome P450 monooxygenase PaP450-2 to yield fusicocca-2,10(14)-diene-8-beta-ol. The cytochrome P450 monooxygenase PaP450-1 then catalyzes the hydroxylation at the C-16 position to produce fusicocca-2,10(14)-diene-8-beta,16-diol. The dioxygenase fc-dox then catalyzes the 16-oxydation of fusicocca-2,10(14)-diene-8-beta,16-diol to yield an aldehyde (8-beta-hydroxyfusicocca-1,10(14)-dien-16-al). The short-chain dehydrogenase/reductase fc-sdr catalyzes the reduction of the aldehyde to yield fusicocca-1,10(14)-diene-8-beta,16-diol. The next step is the hydroxylation at C-9 performed by the cytochrome P450 monooxygenase PaP450-3 that leads to fusicoccin H aglycon which is glycosylated to fusicoccin H by the O-glycosyltransferase PaGT. Hydroxylation at C-12 by the cytochrome P450 monooxygenase PaP450-4 leads then to the production of fusicoccin Q and is followed by methylation by the O-methyltransferase PaMT to yield fusicoccin P. Fusicoccin P is further converted to fusicoccin J via prenylation by the O-glucose prenyltransferase PaPT. Cytochrome P450 monooxygenase PaP450-5 then performs hydroxylation at C-19 to yield dideacetyl-fusicoccin A which is acetylated to 3'-O-deacetyl-fusicoccin A by the O-acetyltransferase PaAT-2. Finally, a another acetylation by the O-acetyltransferase PaAT-1 yields fusicoccin A. This Phomopsis amygdali (Fusicoccum amygdali) protein is Fusicoccin H C-9 hydroxylase.